The following is a 343-amino-acid chain: MASAWKVKDPTVAERTVVVSGLPVGLLKDQLVKCYFQDEGGHVEEVIYPSKSKGVAYIIFKEKKVAQDFIRQKKHPPGSEPRLTVSHFSEKVFNYVMAILDLSVFRTQIELESLVVDLKKKIPTLNFSPLGPSGKISVQGSFLAIMKLKQALISKAISPLENNRKDAGERRNWNGENPRRILQKRENSASILGTFVAEPAGSPETLVLDTDIFLYLKHKCEFYHLTLSKYHVLCQERVDGDVTTICLQDAQDGSCSGSVRHVKEFIEECAQEFHLELRKELLVLEGMGDREKRNIRQALEELGGRYPRVLTNVHSTHIDLIGPPSDTYLFKTQLMKSAGQKVT.

In terms of domain architecture, RRM spans 15–90; the sequence is RTVVVSGLPV…PRLTVSHFSE (76 aa).

In Mus musculus (Mouse), this protein is RNA-binding protein 43 (Rbm43).